The primary structure comprises 113 residues: Nucleoid-associated protein SYNW0027 (113 aa).

The protein belongs to the YbaB/EbfC family. In terms of assembly, homodimer.

It is found in the cytoplasm. The protein resides in the nucleoid. Binds to DNA and alters its conformation. May be involved in regulation of gene expression, nucleoid organization and DNA protection. This chain is Nucleoid-associated protein SYNW0027, found in Parasynechococcus marenigrum (strain WH8102).